Consider the following 101-residue polypeptide: Ubiquitin-related modifier 1 (101 aa).

Glycine 101 is modified (1-thioglycine). Glycine 101 is covalently cross-linked (Glycyl lysine isopeptide (Gly-Lys) (interchain with K-? in acceptor proteins)).

Belongs to the URM1 family. C-terminal thiocarboxylation occurs in 2 steps, it is first acyl-adenylated (-COAMP) via the hesA/moeB/thiF part of UBA4, then thiocarboxylated (-COSH) via the rhodanese domain of UBA4.

The protein resides in the cytoplasm. It participates in tRNA modification; 5-methoxycarbonylmethyl-2-thiouridine-tRNA biosynthesis. In terms of biological role, acts as a sulfur carrier required for 2-thiolation of mcm(5)S(2)U at tRNA wobble positions of cytosolic tRNA(Lys), tRNA(Glu) and tRNA(Gln). Serves as sulfur donor in tRNA 2-thiolation reaction by being thiocarboxylated (-COSH) at its C-terminus by the MOCS3 homolog UBA4. The sulfur is then transferred to tRNA to form 2-thiolation of mcm(5)S(2)U. Prior mcm(5) tRNA modification by the elongator complex is required for 2-thiolation. Also acts as a ubiquitin-like protein (UBL) that is covalently conjugated via an isopeptide bond to lysine residues of target proteins such as AHP1. The thiocarboxylated form serves as substrate for conjugation and oxidative stress specifically induces the formation of UBL-protein conjugates. This is Ubiquitin-related modifier 1 from Scheffersomyces stipitis (strain ATCC 58785 / CBS 6054 / NBRC 10063 / NRRL Y-11545) (Yeast).